A 184-amino-acid polypeptide reads, in one-letter code: UPF0398 protein BCB4264_A1614 (184 aa).

Belongs to the UPF0398 family.

In Bacillus cereus (strain B4264), this protein is UPF0398 protein BCB4264_A1614.